Consider the following 153-residue polypeptide: Superoxide dismutase [Cu-Zn] (153 aa).

The N-linked (GlcNAc...) asparagine glycan is linked to Asn24. 3 residues coordinate Cu cation: His47, His49, and His64. Residues Cys58 and Cys147 are joined by a disulfide bond. Zn(2+)-binding residues include His64, His72, His81, and Asp84. Residue His121 participates in Cu cation binding. The segment covering 126–137 (DLGRGGNEESKK) has biased composition (basic and acidic residues). Positions 126–145 (DLGRGGNEESKKTGNAGPRP) are disordered. Arg144 contacts substrate.

Belongs to the Cu-Zn superoxide dismutase family. Homodimer. Requires Cu cation as cofactor. Zn(2+) is required as a cofactor.

It localises to the cytoplasm. It catalyses the reaction 2 superoxide + 2 H(+) = H2O2 + O2. In terms of biological role, destroys radicals which are normally produced within the cells and which are toxic to biological systems. The sequence is that of Superoxide dismutase [Cu-Zn] from Humicola lutea.